The chain runs to 288 residues: Pantothenate synthetase (288 aa).

Methionine 31–histidine 38 contributes to the ATP binding site. Histidine 38 (proton donor) is an active-site residue. Glutamine 62 is a binding site for (R)-pantoate. A beta-alanine-binding site is contributed by glutamine 62. Glycine 150–aspartate 153 contacts ATP. A (R)-pantoate-binding site is contributed by glutamine 156. Residues isoleucine 179 and leucine 187–arginine 190 each bind ATP.

This sequence belongs to the pantothenate synthetase family. As to quaternary structure, homodimer.

The protein localises to the cytoplasm. The catalysed reaction is (R)-pantoate + beta-alanine + ATP = (R)-pantothenate + AMP + diphosphate + H(+). Its pathway is cofactor biosynthesis; (R)-pantothenate biosynthesis; (R)-pantothenate from (R)-pantoate and beta-alanine: step 1/1. Functionally, catalyzes the condensation of pantoate with beta-alanine in an ATP-dependent reaction via a pantoyl-adenylate intermediate. The polypeptide is Pantothenate synthetase (Wigglesworthia glossinidia brevipalpis).